The sequence spans 202 residues: Large ribosomal subunit protein uL13 (202 aa).

The protein belongs to the universal ribosomal protein uL13 family. Component of the large ribosomal subunit (LSU). Mature N.crassa ribosomes consist of a small (40S) and a large (60S) subunit. The 40S small subunit contains 1 molecule of ribosomal RNA (18S rRNA) and at least 32 different proteins. The large 60S subunit contains 3 rRNA molecules (26S, 5.8S and 5S rRNA) and at least 42 different proteins.

The protein resides in the cytoplasm. Its function is as follows. Component of the ribosome, a large ribonucleoprotein complex responsible for the synthesis of proteins in the cell. The small ribosomal subunit (SSU) binds messenger RNAs (mRNAs) and translates the encoded message by selecting cognate aminoacyl-transfer RNA (tRNA) molecules. The large subunit (LSU) contains the ribosomal catalytic site termed the peptidyl transferase center (PTC), which catalyzes the formation of peptide bonds, thereby polymerizing the amino acids delivered by tRNAs into a polypeptide chain. The nascent polypeptides leave the ribosome through a tunnel in the LSU and interact with protein factors that function in enzymatic processing, targeting, and the membrane insertion of nascent chains at the exit of the ribosomal tunnel. In Neurospora crassa (strain ATCC 24698 / 74-OR23-1A / CBS 708.71 / DSM 1257 / FGSC 987), this protein is Large ribosomal subunit protein uL13 (crp-46).